The sequence spans 100 residues: Large ribosomal subunit protein uL23 (100 aa).

The protein belongs to the universal ribosomal protein uL23 family. In terms of assembly, part of the 50S ribosomal subunit. Contacts protein L29, and trigger factor when it is bound to the ribosome.

One of the early assembly proteins it binds 23S rRNA. One of the proteins that surrounds the polypeptide exit tunnel on the outside of the ribosome. Forms the main docking site for trigger factor binding to the ribosome. The chain is Large ribosomal subunit protein uL23 from Pseudothermotoga lettingae (strain ATCC BAA-301 / DSM 14385 / NBRC 107922 / TMO) (Thermotoga lettingae).